The sequence spans 298 residues: Lipoyl synthase 1 (298 aa).

[4Fe-4S] cluster contacts are provided by Cys-34, Cys-39, Cys-45, Cys-60, Cys-64, Cys-67, and Ser-274. Residues 46–263 (FKAGTATFLI…RRAGEGMGFL (218 aa)) enclose the Radical SAM core domain. The interval 277–298 (AEQVQRLMRSHPRTPKNQHSPE) is disordered.

Belongs to the radical SAM superfamily. Lipoyl synthase family. The cofactor is [4Fe-4S] cluster.

The protein resides in the cytoplasm. The catalysed reaction is [[Fe-S] cluster scaffold protein carrying a second [4Fe-4S](2+) cluster] + N(6)-octanoyl-L-lysyl-[protein] + 2 oxidized [2Fe-2S]-[ferredoxin] + 2 S-adenosyl-L-methionine + 4 H(+) = [[Fe-S] cluster scaffold protein] + N(6)-[(R)-dihydrolipoyl]-L-lysyl-[protein] + 4 Fe(3+) + 2 hydrogen sulfide + 2 5'-deoxyadenosine + 2 L-methionine + 2 reduced [2Fe-2S]-[ferredoxin]. It functions in the pathway protein modification; protein lipoylation via endogenous pathway; protein N(6)-(lipoyl)lysine from octanoyl-[acyl-carrier-protein]: step 2/2. Catalyzes the radical-mediated insertion of two sulfur atoms into the C-6 and C-8 positions of the octanoyl moiety bound to the lipoyl domains of lipoate-dependent enzymes, thereby converting the octanoylated domains into lipoylated derivatives. The polypeptide is Lipoyl synthase 1 (Gloeobacter violaceus (strain ATCC 29082 / PCC 7421)).